A 216-amino-acid polypeptide reads, in one-letter code: Phosphoserine phosphatase (216 aa).

Aspartate 10 serves as the catalytic Nucleophile. Mg(2+) contacts are provided by aspartate 10 and aspartate 12. Aspartate 12 acts as the Proton donor in catalysis. Substrate-binding positions include glutamate 19, arginine 55, 98–99, and lysine 143; that span reads SG. Mg(2+) is bound at residue aspartate 166. Residue asparagine 169 participates in substrate binding.

It belongs to the HAD-like hydrolase superfamily. SerB family. Mg(2+) serves as cofactor.

The catalysed reaction is O-phospho-L-serine + H2O = L-serine + phosphate. It carries out the reaction O-phospho-D-serine + H2O = D-serine + phosphate. It participates in amino-acid biosynthesis; L-serine biosynthesis; L-serine from 3-phospho-D-glycerate: step 3/3. The sequence is that of Phosphoserine phosphatase from Lactococcus lactis subsp. lactis (strain IL1403) (Streptococcus lactis).